Here is a 219-residue protein sequence, read N- to C-terminus: Imidazole glycerol phosphate synthase subunit HisH (219 aa).

The Glutamine amidotransferase type-1 domain maps to 2-218 (KVVVIDSGTG…MVWTPEGTSG (217 aa)). The Nucleophile role is filled by cysteine 87. Active-site residues include histidine 193 and glutamate 195.

In terms of assembly, heterodimer of HisH and HisF.

It localises to the cytoplasm. The catalysed reaction is 5-[(5-phospho-1-deoxy-D-ribulos-1-ylimino)methylamino]-1-(5-phospho-beta-D-ribosyl)imidazole-4-carboxamide + L-glutamine = D-erythro-1-(imidazol-4-yl)glycerol 3-phosphate + 5-amino-1-(5-phospho-beta-D-ribosyl)imidazole-4-carboxamide + L-glutamate + H(+). The enzyme catalyses L-glutamine + H2O = L-glutamate + NH4(+). The protein operates within amino-acid biosynthesis; L-histidine biosynthesis; L-histidine from 5-phospho-alpha-D-ribose 1-diphosphate: step 5/9. In terms of biological role, IGPS catalyzes the conversion of PRFAR and glutamine to IGP, AICAR and glutamate. The HisH subunit catalyzes the hydrolysis of glutamine to glutamate and ammonia as part of the synthesis of IGP and AICAR. The resulting ammonia molecule is channeled to the active site of HisF. The sequence is that of Imidazole glycerol phosphate synthase subunit HisH from Granulibacter bethesdensis (strain ATCC BAA-1260 / CGDNIH1).